Here is an 815-residue protein sequence, read N- to C-terminus: Kinesin heavy chain (815 aa).

In terms of domain architecture, Kinesin motor spans 11 to 329 (GVQVFCRIRP…LLFGARAKTI (319 aa)). 88 to 95 (GQTSSGKT) serves as a coordination point for ATP. Coiled-coil stretches lie at residues 335 to 374 (INEE…RWRA), 422 to 554 (PITD…LDEC), and 695 to 785 (PAQK…RMNA). Positions 788–815 (IVKPIRPGQVYTSPSAGMSQGAPNGSNA) are disordered. The span at 797 to 815 (VYTSPSAGMSQGAPNGSNA) shows a compositional bias: polar residues.

It belongs to the TRAFAC class myosin-kinesin ATPase superfamily. Kinesin family. Kinesin subfamily. In terms of assembly, oligomer composed of two heavy chains and two light chains.

The protein resides in the cytoplasm. It localises to the cytoskeleton. In terms of biological role, microtubule-dependent motor protein required for organelle transport. Plays a role in endosome transport. Required for the transport of mitochondria along the axon of motor neurons. Involved in the nuclear migration of hyp7 hypodermal precursor cells. Required for the formation of dendritic branches of PVD sensory neurons. In non-ciliated neurons such as the PVD and PHC neurons, required for the organization of minus-end out microtubules in dendrites. Also required for the minus-end out orientation of microtubules in dendrites of AQR gas-sensing neurons. Involved in the localization of unc-33 to neurites. Positively regulates cilium position and dendrite morphogenesis in the postembryonic AQR and PQR gas-sensing neurons. Plays a more prominent role in regulating dendrite morphogenesis in AQR than in PQR neurons. Plays a role in regulating the localization of grdn-1 to the distal dendrites of AQR sensory neurons. The chain is Kinesin heavy chain from Caenorhabditis elegans.